Consider the following 290-residue polypeptide: Bifunctional protein FolD (290 aa).

NADP(+) is bound by residues 169-171, Ile-194, and Ile-235; that span reads GAS.

This sequence belongs to the tetrahydrofolate dehydrogenase/cyclohydrolase family. Homodimer.

The enzyme catalyses (6R)-5,10-methylene-5,6,7,8-tetrahydrofolate + NADP(+) = (6R)-5,10-methenyltetrahydrofolate + NADPH. It carries out the reaction (6R)-5,10-methenyltetrahydrofolate + H2O = (6R)-10-formyltetrahydrofolate + H(+). It participates in one-carbon metabolism; tetrahydrofolate interconversion. Catalyzes the oxidation of 5,10-methylenetetrahydrofolate to 5,10-methenyltetrahydrofolate and then the hydrolysis of 5,10-methenyltetrahydrofolate to 10-formyltetrahydrofolate. The protein is Bifunctional protein FolD of Helicobacter pylori (strain J99 / ATCC 700824) (Campylobacter pylori J99).